Consider the following 316-residue polypeptide: Transaldolase (316 aa).

The active-site Schiff-base intermediate with substrate is the K125.

Belongs to the transaldolase family. Type 1 subfamily. In terms of assembly, homodimer.

Its subcellular location is the cytoplasm. The catalysed reaction is D-sedoheptulose 7-phosphate + D-glyceraldehyde 3-phosphate = D-erythrose 4-phosphate + beta-D-fructose 6-phosphate. The protein operates within carbohydrate degradation; pentose phosphate pathway; D-glyceraldehyde 3-phosphate and beta-D-fructose 6-phosphate from D-ribose 5-phosphate and D-xylulose 5-phosphate (non-oxidative stage): step 2/3. Functionally, transaldolase is important for the balance of metabolites in the pentose-phosphate pathway. The chain is Transaldolase from Acidovorax sp. (strain JS42).